An 87-amino-acid chain; its full sequence is Precursor of CEP8 (87 aa).

An N-terminal signal peptide occupies residues 1-29; it reads MAKALFFNFCISLLIIAILVSHEIIPTEA. A propeptide spanning residues 30 to 72 is cleaved from the precursor; the sequence is RHLRTHRKSIKNSTLTVHEGAGGLRTGGGSVKTDISKEEHGVD. N41 is a glycosylation site (N-linked (GlcNAc...) asparagine). Positions 41-87 are disordered; that stretch reads NSTLTVHEGAGGLRTGGGSVKTDISKEEHGVDEFRPTTPGNSPGIGH. A compositionally biased stretch (gly residues) spans 49 to 59; the sequence is GAGGLRTGGGS. Residues 63 to 75 are compositionally biased toward basic and acidic residues; it reads DISKEEHGVDEFR. P76, P79, and P83 each carry hydroxyproline.

The protein belongs to the C-terminally encoded plant signaling peptide (CEP) family. As to quaternary structure, interacts with CEP receptors (e.g. CEPR1 and CEPR2). In terms of processing, the mature small signaling peptide is generated by proteolytic processing of the longer precursor. Expressed in lateral root primordia and in lateral roots excluding the meristem region. Also present in the aerial tissues, such as leaf petioles and the shoot apex region.

Its subcellular location is the secreted. The protein resides in the extracellular space. It is found in the apoplast. Extracellular signaling peptide that may regulate primary root growth rate and systemic nitrogen (N)-demand signaling. Mediates up-regulation of genes involved in N uptake and assimilation pathways. The protein is Precursor of CEP8 of Arabidopsis thaliana (Mouse-ear cress).